The primary structure comprises 311 residues: GTPase Era (311 aa).

Positions 18–185 constitute an Era-type G domain; the sequence is RSGFVALIGA…AKYLAESVPN (168 aa). Residues 26–33 are G1; the sequence is GAPNAGKS. A GTP-binding site is contributed by 26–33; the sequence is GAPNAGKS. Residues 52 to 56 are G2; that stretch reads QTTRA. A G3 region spans residues 73 to 76; that stretch reads DTPG. Residues 73 to 77 and 135 to 138 each bind GTP; these read DTPGI and NKVD. A G4 region spans residues 135-138; sequence NKVD. A G5 region spans residues 164–166; that stretch reads ISA. In terms of domain architecture, KH type-2 spans 216-293; it reads LHEELPYAST…HQFLFVKVRE (78 aa).

The protein belongs to the TRAFAC class TrmE-Era-EngA-EngB-Septin-like GTPase superfamily. Era GTPase family. In terms of assembly, monomer.

The protein localises to the cytoplasm. The protein resides in the cell inner membrane. Its function is as follows. An essential GTPase that binds both GDP and GTP, with rapid nucleotide exchange. Plays a role in 16S rRNA processing and 30S ribosomal subunit biogenesis and possibly also in cell cycle regulation and energy metabolism. This Brucella melitensis biotype 1 (strain ATCC 23456 / CCUG 17765 / NCTC 10094 / 16M) protein is GTPase Era.